The following is a 204-amino-acid chain: Ribonuclease HII (204 aa).

The region spanning 17 to 204 (TLIAGVDEVG…KPVKKVLGLL (188 aa)) is the RNase H type-2 domain. The a divalent metal cation site is built by aspartate 23, glutamate 24, and aspartate 115.

This sequence belongs to the RNase HII family. Mn(2+) is required as a cofactor. It depends on Mg(2+) as a cofactor.

It is found in the cytoplasm. The catalysed reaction is Endonucleolytic cleavage to 5'-phosphomonoester.. Endonuclease that specifically degrades the RNA of RNA-DNA hybrids. The sequence is that of Ribonuclease HII from Psychromonas ingrahamii (strain DSM 17664 / CCUG 51855 / 37).